A 183-amino-acid chain; its full sequence is Ribosome-recycling factor (183 aa).

The protein belongs to the RRF family.

The protein localises to the cytoplasm. Functionally, responsible for the release of ribosomes from messenger RNA at the termination of protein biosynthesis. May increase the efficiency of translation by recycling ribosomes from one round of translation to another. The sequence is that of Ribosome-recycling factor from Bifidobacterium longum (strain DJO10A).